The sequence spans 479 residues: Aspartyl/glutamyl-tRNA(Asn/Gln) amidotransferase subunit B (479 aa).

This sequence belongs to the GatB/GatE family. GatB subfamily. As to quaternary structure, heterotrimer of A, B and C subunits.

It carries out the reaction L-glutamyl-tRNA(Gln) + L-glutamine + ATP + H2O = L-glutaminyl-tRNA(Gln) + L-glutamate + ADP + phosphate + H(+). It catalyses the reaction L-aspartyl-tRNA(Asn) + L-glutamine + ATP + H2O = L-asparaginyl-tRNA(Asn) + L-glutamate + ADP + phosphate + 2 H(+). In terms of biological role, allows the formation of correctly charged Asn-tRNA(Asn) or Gln-tRNA(Gln) through the transamidation of misacylated Asp-tRNA(Asn) or Glu-tRNA(Gln) in organisms which lack either or both of asparaginyl-tRNA or glutaminyl-tRNA synthetases. The reaction takes place in the presence of glutamine and ATP through an activated phospho-Asp-tRNA(Asn) or phospho-Glu-tRNA(Gln). The polypeptide is Aspartyl/glutamyl-tRNA(Asn/Gln) amidotransferase subunit B (Streptococcus pyogenes serotype M6 (strain ATCC BAA-946 / MGAS10394)).